The sequence spans 370 residues: MNNSIITDDEVREFYLNCSSQTIIESLLSLHESLRLYSQNHEILLNRMFKKLDETNADSNISHIFMPVVSKDFSGIKILVNNNNKNFQGVINVIEPETGKLIGCFEAKQITAIRTALASCIGLYKQLSCSHDKLFRFENGTCYLTCFGTGLQAFWHIYIAIKLIMSGIVGESLKLVEINILYHNNMMSLDRLKSLKNLFGSNIKIELNQYQINDISSEGNGAVSNSDIIFGCLPTLEPNLFLRQLLNSKASVEQKHTYISLIGSYKPVMHECDKELIDKFKSDNESACILVDSREHTLLESGELIDSNIAPHNLIEIGELDTLKNTVLNLNEKGCKRTITLCKIVGLAVMDVALAKEFLSLRTKNTENKE.

Met-1 is modified (N-acetylmethionine).

Belongs to the ornithine cyclodeaminase/mu-crystallin family.

This is an uncharacterized protein from Saccharomyces cerevisiae (strain ATCC 204508 / S288c) (Baker's yeast).